Here is a 554-residue protein sequence, read N- to C-terminus: Urocanate hydratase (554 aa).

Residues 50 to 51 (GG), Gln-128, 174 to 176 (GMG), Glu-194, Arg-199, 240 to 241 (NA), 261 to 265 (QTSAH), 271 to 272 (YI), and Tyr-320 each bind NAD(+). Cys-408 is a catalytic residue. Residue Gly-490 coordinates NAD(+).

This sequence belongs to the urocanase family. Requires NAD(+) as cofactor.

The protein localises to the cytoplasm. The enzyme catalyses 4-imidazolone-5-propanoate = trans-urocanate + H2O. It functions in the pathway amino-acid degradation; L-histidine degradation into L-glutamate; N-formimidoyl-L-glutamate from L-histidine: step 2/3. In terms of biological role, catalyzes the conversion of urocanate to 4-imidazolone-5-propionate. The chain is Urocanate hydratase from Rubrobacter xylanophilus (strain DSM 9941 / JCM 11954 / NBRC 16129 / PRD-1).